The following is a 162-amino-acid chain: NADH-quinone oxidoreductase subunit I (162 aa).

4Fe-4S ferredoxin-type domains follow at residues 52–82 and 93–122; these read LRRY…IEAG and TRYD…EGPN. [4Fe-4S] cluster is bound by residues C62, C65, C68, C72, C102, C105, C108, and C112.

This sequence belongs to the complex I 23 kDa subunit family. NDH-1 is composed of 14 different subunits. Subunits NuoA, H, J, K, L, M, N constitute the membrane sector of the complex. [4Fe-4S] cluster serves as cofactor.

It localises to the cell inner membrane. It catalyses the reaction a quinone + NADH + 5 H(+)(in) = a quinol + NAD(+) + 4 H(+)(out). In terms of biological role, NDH-1 shuttles electrons from NADH, via FMN and iron-sulfur (Fe-S) centers, to quinones in the respiratory chain. The immediate electron acceptor for the enzyme in this species is believed to be ubiquinone. Couples the redox reaction to proton translocation (for every two electrons transferred, four hydrogen ions are translocated across the cytoplasmic membrane), and thus conserves the redox energy in a proton gradient. In Beijerinckia indica subsp. indica (strain ATCC 9039 / DSM 1715 / NCIMB 8712), this protein is NADH-quinone oxidoreductase subunit I.